The primary structure comprises 65 residues: Alpha-conotoxin BnIA (65 aa).

An N-terminal signal peptide occupies residues 1–21; that stretch reads MGMRMMFTMFLLVVLATTVVS. Positions 22–48 are excised as a propeptide; sequence FASDRASDGRNAAAKDKASDLVALTVK. Intrachain disulfides connect Cys50–Cys56 and Cys51–Cys64. A ser-Xaa-Pro motif, crucial for potent interaction with nAChR region spans residues 52 to 54; sequence SHP. Cys64 carries the cysteine amide modification.

The protein belongs to the conotoxin A superfamily. As to expression, expressed by the venom duct.

The protein resides in the secreted. Functionally, alpha-conotoxins act on postsynaptic membranes, they bind to the nicotinic acetylcholine receptors (nAChR) and thus inhibit them. This toxin inhibits acetylcholine-evoked currents reversibly in oocytes expressing the human alpha-7/CHRNA7 nAChR, and blocks nerve-evoked skeletal muscle contractions in isolated mouse neuromuscular preparations, but with a very low affinity. The chain is Alpha-conotoxin BnIA from Conus bandanus (Banded marble cone).